The chain runs to 107 residues: DNA-directed RNA polymerase subunit omega (107 aa).

Belongs to the RNA polymerase subunit omega family. The RNAP catalytic core consists of 2 alpha, 1 beta, 1 beta' and 1 omega subunit. When a sigma factor is associated with the core the holoenzyme is formed, which can initiate transcription.

It catalyses the reaction RNA(n) + a ribonucleoside 5'-triphosphate = RNA(n+1) + diphosphate. Functionally, promotes RNA polymerase assembly. Latches the N- and C-terminal regions of the beta' subunit thereby facilitating its interaction with the beta and alpha subunits. In Oenococcus oeni (strain ATCC BAA-331 / PSU-1), this protein is DNA-directed RNA polymerase subunit omega.